A 132-amino-acid chain; its full sequence is D-ribose pyranase (132 aa).

The Proton donor role is filled by H20. Substrate-binding positions include D28, H99, and 121–123 (YSN).

This sequence belongs to the RbsD / FucU family. RbsD subfamily. Homodecamer.

Its subcellular location is the cytoplasm. The enzyme catalyses beta-D-ribopyranose = beta-D-ribofuranose. It participates in carbohydrate metabolism; D-ribose degradation; D-ribose 5-phosphate from beta-D-ribopyranose: step 1/2. Its function is as follows. Catalyzes the interconversion of beta-pyran and beta-furan forms of D-ribose. The chain is D-ribose pyranase from Streptococcus agalactiae serotype Ia (strain ATCC 27591 / A909 / CDC SS700).